The chain runs to 718 residues: Telomeric repeat-binding factor 2 (718 aa).

2 disordered regions span residues 1-22 and 219-286; these read MAAK…RSDD and NSER…GAPE. Composition is skewed to basic and acidic residues over residues 8-22 and 219-228; these read AAME…RSDD and NSERAEEPKR. The interval 24-220 is TRFH dimerization; it reads EQAVNRWVLQ…LVTMMKSLNS (197 aa). Tandem repeats lie at residues 257-269, 270-282, 283-295, 296-308, 309-321, 322-334, 335-347, 348-360, 361-373, 374-386, 387-399, 400-412, 413-425, 426-438, and 439-451. Positions 257 to 451 are 15 X 13 AA approximate tandem repeats; sequence GTLRRAETAG…EPMKSASYPT (195 aa). Disordered regions lie at residues 342–455 and 524–641; these read TARD…ASQP and FNKL…WSDE. Residues 405-425 are compositionally biased toward basic and acidic residues; sequence AERRKDLVRAPKRAETARDVV. Residues 533-543 show a composition bias toward polar residues; it reads PSPQQMSPSVS. The short motif at 545 to 550 is the Nuclear localization signal element; it reads RTKRRK. The segment covering 584–595 has biased composition (low complexity); that stretch reads SQCSKSSESPDS. The span at 615 to 630 shows a compositional bias: polar residues; sequence PVSTKRSSQQRWNSSY. The 54-residue stretch at 664-717 folds into the HTH myb-type domain; that stretch reads KKQKWTVQESEWIKDGVRKYGEGRWKTISEKYPFQNRTSVQIKDRYRTMKKLGI. The segment at residues 688-713 is a DNA-binding region (H-T-H motif); the sequence is WKTISEKYPFQNRTSVQIKDRYRTMK.

As to quaternary structure, homodimer. Component of the shelterin complex (telosome). Interacts with TERF2IP/RAP1. As to expression, highly expressed in embryo.

The protein localises to the nucleus. The protein resides in the chromosome. It localises to the telomere. In terms of biological role, binds the telomeric double-stranded 5'-TTAGGG-3' repeat and plays a central role in telomere maintenance and protection against end-to-end fusion of chromosomes. In addition to its telomeric DNA-binding role, required to recruit a number of factors and enzymes required for telomere protection, including the shelterin complex, TERF2IP/RAP1 and DCLRE1B/Apollo. Component of the shelterin complex (telosome) that is involved in the regulation of telomere length and protection. Shelterin associates with arrays of double-stranded 5'-TTAGGG-3' repeats added by telomerase and protects chromosome ends; without its protective activity, telomeres are no longer hidden from the DNA damage surveillance and chromosome ends are inappropriately processed by DNA repair pathways. Together with DCLRE1B/Apollo, plays a key role in telomeric loop (T loop) formation by generating 3' single-stranded overhang at the leading end telomeres: T loops have been proposed to protect chromosome ends from degradation and repair. Required both to recruit DCLRE1B/Apollo to telomeres and activate the exonuclease activity of DCLRE1B/Apollo. Together with DCLRE1B/Apollo, required to control the amount of DNA topoisomerase (TOP1, TOP2A and TOP2B) needed for telomere replication during fork passage and prevent aberrant telomere topology. Recruits TERF2IP/RAP1 to telomeres, thereby participating in to repressing homology-directed repair (HDR), which can affect telomere length. This Gallus gallus (Chicken) protein is Telomeric repeat-binding factor 2 (TERF2).